Here is a 533-residue protein sequence, read N- to C-terminus: Probable metalloreductase AIM14 (533 aa).

7 consecutive transmembrane segments (helical) span residues 17-37 (IPYGYYTATVSLIFIILLIGA), 61-81 (GGSPLLYLVVLFVALLVPFVH), 102-122 (VLATLNLFLTLRPNFLLPGYV), 136-156 (SLCLLALVHGVGFLVKWALDS), 168-188 (IPNLAGLVVGALMAFMVLLSV), 198-218 (SFYLTHIIGAWVFVFLTAYHA), and 220-240 (PGVFVPYTLLNAGLFVFYILS). The Ferric oxidoreductase domain maps to 96–213 (LGRLSYVLAT…IIGAWVFVFL (118 aa)). One can recognise an FAD-binding FR-type domain in the interval 240–366 (SKTVPARGVE…GGSGLSYALP (127 aa)).

It belongs to the ferric reductase (FRE) family. AIM14 subfamily.

It localises to the membrane. Probable cell surface metalloreductase. May be involved in iron or copper homeostasis. The protein is Probable metalloreductase AIM14 (AIM14) of Lachancea thermotolerans (strain ATCC 56472 / CBS 6340 / NRRL Y-8284) (Yeast).